The following is a 472-amino-acid chain: Deoxyribodipyrimidine photo-lyase (472 aa).

One can recognise a Photolyase/cryptochrome alpha/beta domain in the interval 2 to 134; that stretch reads TTHLVWFRQD…VCEGFDDSVI (133 aa). (6R)-5,10-methylene-5,6,7,8-tetrahydrofolate is bound by residues asparagine 109 and glutamate 110. Tyrosine 223 is a binding site for FAD. Arginine 227 contributes to the DNA binding site. Residues 235-239, tryptophan 272, and 275-282 contribute to the FAD site; these read TSRLS and ELIWREFY. 2 interaction with DNA regions span residues 275–282 and 342–343; these read ELIWREFY and NR. FAD is bound at residue 373–375; it reads DGD. Position 405 (glutamine 405) interacts with DNA.

The protein belongs to the DNA photolyase class-1 family. Monomer. FAD is required as a cofactor. The cofactor is (6R)-5,10-methylene-5,6,7,8-tetrahydrofolate.

It carries out the reaction cyclobutadipyrimidine (in DNA) = 2 pyrimidine residues (in DNA).. In terms of biological role, involved in repair of UV radiation-induced DNA damage. Catalyzes the light-dependent monomerization (300-600 nm) of cyclobutyl pyrimidine dimers (in cis-syn configuration), which are formed between adjacent bases on the same DNA strand upon exposure to ultraviolet radiation. The chain is Deoxyribodipyrimidine photo-lyase (phrB) from Escherichia coli (strain K12).